The following is a 183-amino-acid chain: Small ribosomal subunit protein uS4 (183 aa).

An S4 RNA-binding domain is found at 106-168 (RRLETLVYKK…ETSPFTDENH (63 aa)). Positions 158–183 (NETSPFTDENHPLRMEMSGTKEEENE) are disordered. The segment covering 165–183 (DENHPLRMEMSGTKEEENE) has biased composition (basic and acidic residues).

It belongs to the universal ribosomal protein uS4 family. In terms of assembly, part of the 30S ribosomal subunit. Contacts protein S5. The interaction surface between S4 and S5 is involved in control of translational fidelity.

In terms of biological role, one of the primary rRNA binding proteins, it binds directly to 16S rRNA where it nucleates assembly of the body of the 30S subunit. Functionally, with S5 and S12 plays an important role in translational accuracy. The protein is Small ribosomal subunit protein uS4 of Picrophilus torridus (strain ATCC 700027 / DSM 9790 / JCM 10055 / NBRC 100828 / KAW 2/3).